The sequence spans 1114 residues: Isoleucine--tRNA ligase (1114 aa).

The 'HIGH' region signature appears at 61 to 71 (PTANGQPGTHH). The 'KMSKS' region signature appears at 640–644 (KMSKH). Lys643 contacts ATP.

This sequence belongs to the class-I aminoacyl-tRNA synthetase family. IleS type 2 subfamily. As to quaternary structure, monomer. It depends on Zn(2+) as a cofactor.

It localises to the cytoplasm. It catalyses the reaction tRNA(Ile) + L-isoleucine + ATP = L-isoleucyl-tRNA(Ile) + AMP + diphosphate. Catalyzes the attachment of isoleucine to tRNA(Ile). As IleRS can inadvertently accommodate and process structurally similar amino acids such as valine, to avoid such errors it has two additional distinct tRNA(Ile)-dependent editing activities. One activity is designated as 'pretransfer' editing and involves the hydrolysis of activated Val-AMP. The other activity is designated 'posttransfer' editing and involves deacylation of mischarged Val-tRNA(Ile). The sequence is that of Isoleucine--tRNA ligase from Cutibacterium acnes (strain DSM 16379 / KPA171202) (Propionibacterium acnes).